A 172-amino-acid polypeptide reads, in one-letter code: Adenine phosphoribosyltransferase (172 aa).

Belongs to the purine/pyrimidine phosphoribosyltransferase family. As to quaternary structure, homodimer.

The protein localises to the cytoplasm. It carries out the reaction AMP + diphosphate = 5-phospho-alpha-D-ribose 1-diphosphate + adenine. Its pathway is purine metabolism; AMP biosynthesis via salvage pathway; AMP from adenine: step 1/1. Catalyzes a salvage reaction resulting in the formation of AMP, that is energically less costly than de novo synthesis. The polypeptide is Adenine phosphoribosyltransferase (Clostridium perfringens (strain ATCC 13124 / DSM 756 / JCM 1290 / NCIMB 6125 / NCTC 8237 / Type A)).